A 388-amino-acid polypeptide reads, in one-letter code: MENRSISRTQLRNRNLKLVLQQIINHPATSRIAISHELNLNKSTISSLYNSLSADHFIEELGEGAASNVGGRKPIMARLNKKYGYTITFDLGYRQLHAMANYLDAEIIDYQEIDTKGRPIEAMLDDCRHFVQEMQTQVHAIHGLLGICFSIHGIINDNQIVHSPWIDMHDIDIVKQFKAEFDVPVILENEANLSAIYERDFNAGLDYRNSITLSIHRGIGAGIILDKHLFRGKQGEAGEVGRSLTLLGPNTAGQSVESICSEEAIINRVKRIKQDETTNRQTVVQLYQQHDREVERILSQSCSVIAGLIYNVVTTLNPDAIFINSELLAETPELLGDIQDNYRDIAQDQLPITLTKNTQFATSLGGCSLITHYVLGMVDYELQFKEAD.

The segment at residues R31–N50 is a DNA-binding region (H-T-H motif).

It belongs to the ROK (NagC/XylR) family.

Its function is as follows. Transcriptional repressor of xylose-utilizing enzymes. This chain is Xylose repressor (xylR), found in Lactiplantibacillus pentosus (Lactobacillus pentosus).